The chain runs to 424 residues: ATP-sensitive inward rectifier potassium channel 8 (424 aa).

Residues 1 to 69 (MLARKSIIPE…IFTTLVDLKW (69 aa)) are Cytoplasmic-facing. Serine 6 carries the post-translational modification Phosphoserine. Residues 70–94 (RHTLVIFTMSFLCSWLLFAIMWWLV) traverse the membrane as a helical segment. Topologically, residues 95–126 (AFAHGDIYAYMEKSGMEKSGLESTVCVTNVRS) are extracellular. Positions 127-138 (FTSAFLFSIEVQ) form an intramembrane region, helical; Pore-forming. The pore-forming intramembrane region spans 139–145 (VTIGFGG). The short motif at 140–145 (TIGFGG) is the Selectivity filter element. Over 146–154 (RMMTEECPL) the chain is Extracellular. The chain crosses the membrane as a helical span at residues 155–176 (AITVLILQNIVGLIINAVMLGC). Residues 177–424 (IFMKTAQAHR…PEGNQNTSES (248 aa)) are Cytoplasmic-facing. Residues 375 to 424 (SHQNSLRKRNSMRRNNSMRRNNSIRRNNSSLMVPKVQFMTPEGNQNTSES) form a disordered region. Over residues 387–404 (RRNNSMRRNNSIRRNNSS) the composition is skewed to low complexity.

Belongs to the inward rectifier-type potassium channel (TC 1.A.2.1) family. KCNJ8 subfamily. Interacts with ABCC9. Predominantly detected in fetal and adult heart.

It localises to the membrane. The catalysed reaction is K(+)(in) = K(+)(out). Inward rectifier potassium channels are characterized by a greater tendency to allow potassium to flow into the cell rather than out of it. Their voltage dependence is regulated by the concentration of extracellular potassium; as external potassium is raised, the voltage range of the channel opening shifts to more positive voltages. The inward rectification is mainly due to the blockage of outward current by internal magnesium. This channel is activated by internal ATP and can be blocked by external barium. Can form a sulfonylurea-sensitive but ATP-insensitive potassium channel with ABCC9. This is ATP-sensitive inward rectifier potassium channel 8 (KCNJ8) from Homo sapiens (Human).